The chain runs to 150 residues: UPF0178 protein PputGB1_5282 (150 aa).

This sequence belongs to the UPF0178 family.

This is UPF0178 protein PputGB1_5282 from Pseudomonas putida (strain GB-1).